Here is a 274-residue protein sequence, read N- to C-terminus: Putative phosphoenolpyruvate synthase regulatory protein (274 aa).

157 to 164 (GVSRCGKT) contributes to the ADP binding site.

It belongs to the pyruvate, phosphate/water dikinase regulatory protein family. PSRP subfamily.

The catalysed reaction is [pyruvate, water dikinase] + ADP = [pyruvate, water dikinase]-phosphate + AMP + H(+). The enzyme catalyses [pyruvate, water dikinase]-phosphate + phosphate + H(+) = [pyruvate, water dikinase] + diphosphate. Functionally, bifunctional serine/threonine kinase and phosphorylase involved in the regulation of the phosphoenolpyruvate synthase (PEPS) by catalyzing its phosphorylation/dephosphorylation. This Bordetella avium (strain 197N) protein is Putative phosphoenolpyruvate synthase regulatory protein.